Reading from the N-terminus, the 464-residue chain is Glutamate--tRNA ligase (464 aa).

Positions 11-21 (PSPTGFIHLGN) match the 'HIGH' region motif. A 'KMSKS' region motif is present at residues 243–247 (KMSKR). Lys-246 lines the ATP pocket.

The protein belongs to the class-I aminoacyl-tRNA synthetase family. Glutamate--tRNA ligase type 1 subfamily. Monomer.

Its subcellular location is the cytoplasm. The catalysed reaction is tRNA(Glu) + L-glutamate + ATP = L-glutamyl-tRNA(Glu) + AMP + diphosphate. Functionally, catalyzes the attachment of glutamate to tRNA(Glu) in a two-step reaction: glutamate is first activated by ATP to form Glu-AMP and then transferred to the acceptor end of tRNA(Glu). The sequence is that of Glutamate--tRNA ligase from Polaromonas naphthalenivorans (strain CJ2).